A 330-amino-acid polypeptide reads, in one-letter code: D-lactate dehydrogenase (330 aa).

NAD(+) contacts are provided by residues 155–156, aspartate 175, 206–207, asparagine 212, 233–235, and aspartate 259; these read RI, MP, and MAR. Arginine 235 is an active-site residue. Glutamate 264 is a catalytic residue. Histidine 296 functions as the Proton donor in the catalytic mechanism.

This sequence belongs to the D-isomer specific 2-hydroxyacid dehydrogenase family.

The catalysed reaction is (R)-lactate + NAD(+) = pyruvate + NADH + H(+). This chain is D-lactate dehydrogenase (ldhD), found in Streptococcus agalactiae serotype V (strain ATCC BAA-611 / 2603 V/R).